We begin with the raw amino-acid sequence, 126 residues long: uncharacterized protein (126 aa).

The segment at 1–46 (MREEEAAAVVTVPQAGRDGEQPGPPAGLGCAAVRGEPGGGGPQESR) is disordered.

The protein localises to the cytoplasm. It is found in the cytoskeleton. Its subcellular location is the cilium basal body. This is an uncharacterized protein from Bos taurus (Bovine).